The primary structure comprises 545 residues: Hsk1-interacting molecule 1 (545 aa).

A DBF4-type zinc finger spans residues Val492 to Pro541. Residues Cys499, Cys502, His512, and His518 each coordinate Zn(2+).

Associates with hsk1. Interacts with mcm10. Hyperphosphorylated at the G1/S and S-phases of the cell cycle.

It localises to the nucleus. Activates hsk1 kinase and is essential for G1/S transition. Has a role in S-phase checkpoint control induced by replication fork blocks after nucleotide deprivation and DNA damage. This is Hsk1-interacting molecule 1 (him1) from Schizosaccharomyces pombe (strain 972 / ATCC 24843) (Fission yeast).